A 266-amino-acid chain; its full sequence is Mitochondrial import inner membrane translocase subunit Tim29 (266 aa).

Residues 1–37 constitute a mitochondrion transit peptide; sequence MVTAALKRFWSGGHGEAGGEAGGATTVAVKPGLWTRL. Topologically, residues 38 to 65 are mitochondrial matrix; sequence STWAGALLRDYAEACGDAAAAARARPGR. The helical transmembrane segment at 66 to 83 threads the bilayer; the sequence is AALYVGLLGGAAACCALA. Over 84 to 266 the chain is Mitochondrial intermembrane; that stretch reads PSEAAFEEAL…DSLVQSDVSR (183 aa).

In terms of assembly, component of the TIM22 complex, which core is composed of TIMM22, associated with TIMM10 (TIMM10A and/or TIMM10B), TIMM9, AGK and TIMM29. Interacts with TIMM10B; the interaction is direct. Interacts with TOMM40; linking the TIM22 complex to the TOM complex. Interacts with TIMM22 (when oxidized); the interaction is direct.

The protein localises to the mitochondrion inner membrane. Its function is as follows. Component of the TIM22 complex, a complex that mediates the import and insertion of multi-pass transmembrane proteins into the mitochondrial inner membrane. The TIM22 complex forms a twin-pore translocase that uses the membrane potential as the external driving force. Required for the stability of the TIM22 complex and functions in the assembly of the TIMM22 protein into the TIM22 complex. May facilitate cooperation between TIM22 and TOM complexes by interacting with TOMM40. The polypeptide is Mitochondrial import inner membrane translocase subunit Tim29 (Timm29) (Mus musculus (Mouse)).